The chain runs to 456 residues: MKKIDEYQGKKVLVMGFGISGINAAHLLVKLGANVTANDKATPKNNDIVDDLEADGIKVITGDNPISLANEGFDVVVKNPGIPYDNPLVAAFVKQGTPIITEAELGWQIFDGHLVSVTGSNGKTTTTTLTQLMIAENAKHQVKYAGNIGISFSKIAEDLGPDDTLVTELSSFQLLGAPTIHPHIAIITNIFSNHLDYHKTRENYINAKLNITRNQTKDDFLVINWDRDEWQKIAQRSQATIVPFSRLNKSHEGSYVEDGMIYWRGQEVMPTKDIRLIGPQNVENALAAIAAAKLSGVTNDAIKKVLTTFSGVRHRLQYVMEYQERLFYNDSKSTDIEATEVALQGFDRPVILLAGGLDRGYTFERLVPYFKKHVKAMIVFGECKDKMKDAGNQAGVPVVESENAITAVPEAWKLSEPGDVILLSPANASWDQFPSFEVRGDKFIEAVEELTGKKEQ.

G119–T125 is a binding site for ATP.

The protein belongs to the MurCDEF family.

The protein resides in the cytoplasm. The catalysed reaction is UDP-N-acetyl-alpha-D-muramoyl-L-alanine + D-glutamate + ATP = UDP-N-acetyl-alpha-D-muramoyl-L-alanyl-D-glutamate + ADP + phosphate + H(+). It functions in the pathway cell wall biogenesis; peptidoglycan biosynthesis. Functionally, cell wall formation. Catalyzes the addition of glutamate to the nucleotide precursor UDP-N-acetylmuramoyl-L-alanine (UMA). This Limosilactobacillus reuteri (strain DSM 20016) (Lactobacillus reuteri) protein is UDP-N-acetylmuramoylalanine--D-glutamate ligase.